Here is an 803-residue protein sequence, read N- to C-terminus: Ribonucleoside-diphosphate reductase large chain (803 aa).

Positions 1 to 91 constitute an ATP-cone domain; the sequence is MYVVNRKGEE…TSNLHKNTSS (91 aa). Residues 5-6, 11-17, Thr-52, and Asp-56 contribute to the ATP site; these read NR and EPVSFDQ. Residue Ser-215 coordinates GDP. Cys-216 and Cys-442 are oxidised to a cystine. DTTP is bound by residues 224–226, Lys-241, Arg-254, and 261–262; these read DSI and RG. GDP is bound at residue Asn-425. The active-site Proton acceptor is the Asn-425. The Cysteine radical intermediate role is filled by Cys-427. GDP is bound by residues Glu-429 and 604-607; that span reads TAST. Glu-429 (proton acceptor) is an active-site residue.

This sequence belongs to the ribonucleoside diphosphate reductase large chain family. As to quaternary structure, heterodimer of a large and a small subunit.

The enzyme catalyses a 2'-deoxyribonucleoside 5'-diphosphate + [thioredoxin]-disulfide + H2O = a ribonucleoside 5'-diphosphate + [thioredoxin]-dithiol. With respect to regulation, under complex allosteric control mediated by deoxynucleoside triphosphates and ATP binding to separate specificity and activation sites on the large subunit. The type of nucleotide bound at the specificity site determines substrate preference. It seems probable that ATP makes the enzyme reduce CDP and UDP, dGTP favors ADP reduction and dTTP favors GDP reduction. Stimulated by ATP and inhibited by dATP binding to the activity site. In terms of biological role, provides the precursors necessary for DNA synthesis. Catalyzes the biosynthesis of deoxyribonucleotides from the corresponding ribonucleotides. The sequence is that of Ribonucleoside-diphosphate reductase large chain (RNR1) from Cryptosporidium parvum.